The following is a 177-amino-acid chain: MSDENNSGAAAPEAQNPGQNAAQPAVRLQILTQYIRDLSFENAVAQKGLPSGEVQPEISVQVSLDARKRPAEHQYEVISKFRVQSSNATDKSPLFLCELDYGGIFHVEGVPEDQLHPFLMIECPRMMFPFVRRIVSDMTRDGGFPPFNMDPVDFVALYRQEIARRTQAQRPADQPLS.

The disordered stretch occupies residues Met1 to Ala22. Over residues Gly8–Ala22 the composition is skewed to low complexity.

The protein belongs to the SecB family. In terms of assembly, homotetramer, a dimer of dimers. One homotetramer interacts with 1 SecA dimer.

It localises to the cytoplasm. In terms of biological role, one of the proteins required for the normal export of preproteins out of the cell cytoplasm. It is a molecular chaperone that binds to a subset of precursor proteins, maintaining them in a translocation-competent state. It also specifically binds to its receptor SecA. This is Protein-export protein SecB from Paracoccus denitrificans (strain Pd 1222).